Consider the following 192-residue polypeptide: dTDP-4-amino-4,6-dideoxy-D-glucose acyltransferase (192 aa).

It belongs to the transferase hexapeptide repeat family.

It catalyses the reaction dTDP-4-amino-4,6-dideoxy-alpha-D-glucose + acetyl-CoA = dTDP-4-acetamido-4,6-dideoxy-alpha-D-glucose + CoA + H(+). Its pathway is bacterial outer membrane biogenesis; lipopolysaccharide biosynthesis. In terms of biological role, catalyzes the conversion of dTDP-4-amino-4,6-dideoxy-D-glucose (dTDP-D-Qui4N) to dTDP-4-acetamido-4,6-dideoxy-D-glucose (dTDP-D-Qui4NAc). In Escherichia coli, this protein is dTDP-4-amino-4,6-dideoxy-D-glucose acyltransferase (vioB).